The primary structure comprises 105 residues: Guanyl-specific ribonuclease U1 (105 aa).

Position 1 is a pyrrolidone carboxylic acid (Gln-1). 2 disulfides stabilise this stretch: Cys-8/Cys-103 and Cys-51/Cys-87. The active site involves His-37. Catalysis depends on Glu-57, which acts as the Proton acceptor. His-92 acts as the Proton donor in catalysis.

This sequence belongs to the ribonuclease N1/T1 family.

The catalysed reaction is [RNA] containing guanosine + H2O = an [RNA fragment]-3'-guanosine-3'-phosphate + a 5'-hydroxy-ribonucleotide-3'-[RNA fragment].. This chain is Guanyl-specific ribonuclease U1, found in Ustilago sphaerogena (Smut fungus).